Reading from the N-terminus, the 150-residue chain is 3-hydroxyacyl-[acyl-carrier-protein] dehydratase FabZ (150 aa).

The active site involves histidine 54.

This sequence belongs to the thioester dehydratase family. FabZ subfamily.

It localises to the cytoplasm. It catalyses the reaction a (3R)-hydroxyacyl-[ACP] = a (2E)-enoyl-[ACP] + H2O. Functionally, involved in unsaturated fatty acids biosynthesis. Catalyzes the dehydration of short chain beta-hydroxyacyl-ACPs and long chain saturated and unsaturated beta-hydroxyacyl-ACPs. The protein is 3-hydroxyacyl-[acyl-carrier-protein] dehydratase FabZ of Aliivibrio fischeri (strain ATCC 700601 / ES114) (Vibrio fischeri).